We begin with the raw amino-acid sequence, 142 residues long: Hemoglobin subunit alpha-2 (142 aa).

The 141-residue stretch at 2 to 142 (VLSPADKTNV…VSTVLTSKYR (141 aa)) folds into the Globin domain. Position 59 (His59) interacts with O2. His88 lines the heme b pocket.

This sequence belongs to the globin family. As to quaternary structure, heterotetramer of two alpha chains and two beta chains. Red blood cells.

Its function is as follows. Involved in oxygen transport from the lung to the various peripheral tissues. In terms of biological role, hemopressin acts as an antagonist peptide of the cannabinoid receptor CNR1. Hemopressin-binding efficiently blocks cannabinoid receptor CNR1 and subsequent signaling. The protein is Hemoglobin subunit alpha-2 (HBA2) of Hylobates lar (Lar gibbon).